The chain runs to 198 residues: Holliday junction branch migration complex subunit RuvA (198 aa).

The segment at 1 to 63 (MYDYIKGQLT…EDAQLLFGFH (63 aa)) is domain I. Residues 64–142 (SEEEKDVFLK…EAPKEESSKP (79 aa)) are domain II. The segment at 143–147 (PKAKQ) is flexible linker. Positions 148–198 (QGNEQLDEAVEALLALGYKATELKKIRAFFEGTSETAEQYIKSALKMLMKG) are domain III.

Belongs to the RuvA family. As to quaternary structure, homotetramer. Forms an RuvA(8)-RuvB(12)-Holliday junction (HJ) complex. HJ DNA is sandwiched between 2 RuvA tetramers; dsDNA enters through RuvA and exits via RuvB. An RuvB hexamer assembles on each DNA strand where it exits the tetramer. Each RuvB hexamer is contacted by two RuvA subunits (via domain III) on 2 adjacent RuvB subunits; this complex drives branch migration. In the full resolvosome a probable DNA-RuvA(4)-RuvB(12)-RuvC(2) complex forms which resolves the HJ.

It is found in the cytoplasm. Functionally, the RuvA-RuvB-RuvC complex processes Holliday junction (HJ) DNA during genetic recombination and DNA repair, while the RuvA-RuvB complex plays an important role in the rescue of blocked DNA replication forks via replication fork reversal (RFR). RuvA specifically binds to HJ cruciform DNA, conferring on it an open structure. The RuvB hexamer acts as an ATP-dependent pump, pulling dsDNA into and through the RuvAB complex. HJ branch migration allows RuvC to scan DNA until it finds its consensus sequence, where it cleaves and resolves the cruciform DNA. This is Holliday junction branch migration complex subunit RuvA from Streptococcus equi subsp. equi (strain 4047).